Reading from the N-terminus, the 788-residue chain is Serine/threonine-protein kinase MARK2 (788 aa).

Positions 1-46 (MSSARTPLPTLNERDTEQPTLGHLDSKPSSKSNMIRGRNSATSADE) are disordered. Over residues 27–45 (KPSSKSNMIRGRNSATSAD) the composition is skewed to polar residues. The residue at position 40 (serine 40) is a Phosphoserine. A Protein kinase domain is found at 53–304 (YRLLKTIGKG…LEQIMKDRWM (252 aa)). Threonine 58 carries the phosphothreonine; by autocatalysis modification. ATP is bound by residues 59–67 (IGKGNFAKV) and lysine 82. Serine 91, serine 92, and serine 93 each carry phosphoserine; by CaMK1. Catalysis depends on aspartate 175, which acts as the Proton acceptor. At threonine 208 the chain carries Phosphothreonine; by LKB1 and TAOK1. Serine 212 carries the post-translational modification Phosphoserine; by GSK3-beta. Serine 274 is modified (phosphoserine; by autocatalysis). A Phosphothreonine; by autocatalysis modification is found at threonine 275. A Phosphothreonine; by CaMK1 modification is found at threonine 294. The 40-residue stretch at 323 to 362 (YKDPRRTELMVSMGYTREEIQDSLVGQRYNEVMATYLLLG) folds into the UBA domain. A disordered region spans residues 373–632 (ITLKPRPSAD…HSQGRRGASG (260 aa)). Phosphoserine occurs at positions 376 and 409. The span at 418 to 432 (PTSNSYSKKTQSNNA) shows a compositional bias: polar residues. Over residues 433-445 (ENKRPEEDRESGR) the composition is skewed to basic and acidic residues. A Phosphoserine modification is found at serine 456. Threonine 467 is subject to Phosphothreonine. Residues 467–486 (TPTPSTNSVLSTSTNRSRNS) are compositionally biased toward polar residues. 2 positions are modified to phosphoserine: serine 486 and serine 493. Positions 495-504 (GQASIQNGKD) are enriched in polar residues. Residues 511–525 (SRASTASASAAVSAA) show a composition bias toward low complexity. A phosphoserine mark is found at serine 569, serine 571, and serine 592. Residue threonine 596 is modified to Phosphothreonine; by PKC/PRKCZ. Phosphoserine is present on residues serine 619 and serine 722. Residues 739–788 (TPGHEDFVQWEMEVCKLPRLSLNGVRFKRISGTSMAFKNIASKIANELKL) form the KA1 domain.

The protein belongs to the protein kinase superfamily. CAMK Ser/Thr protein kinase family. SNF1 subfamily. Homodimer. Interacts with PAK5; leading to inhibit the protein kinase activity. Interacts with MAPT/TAU. Interacts with MTCL1 isoform 1; the interaction is direct and increases MARK2 microtubule-binding ability. Interacts (when phosphorylated at Thr-596) with YWHAZ. Interacts with YWHAB, YWHAG and YWHAQ. In terms of assembly, (Microbial infection) In case of infection, interacts with H.pylori CagA, leading to inhibit kinase activity and junctional and polarity defects. It depends on Mg(2+) as a cofactor. Post-translationally, autophosphorylated. Phosphorylated at Thr-208 by STK11/LKB1 in complex with STE20-related adapter-alpha (STRADA) pseudo kinase and CAB39. Phosphorylation at Thr-208 by TAOK1 activates the kinase activity, leading to phosphorylation and detachment of MAPT/TAU from microtubules. Phosphorylation at Ser-212 by GSK3-beta (GSK3B) inhibits the kinase activity. Phosphorylation by CaMK1 promotes activity and is required to promote neurite outgrowth. Phosphorylation at Thr-596 by PRKCZ/aPKC in polarized epithelial cells inhibits the kinase activity and promotes binding to 14-3-3 protein YWHAZ, leading to relocation from cell membrane to cytoplasm. High levels of expression in heart, brain, skeletal muscle and pancreas, lower levels observed in lung, liver and kidney.

The protein resides in the cell membrane. It is found in the cytoplasm. The protein localises to the lateral cell membrane. Its subcellular location is the cytoskeleton. It localises to the cell projection. The protein resides in the dendrite. The catalysed reaction is L-seryl-[protein] + ATP = O-phospho-L-seryl-[protein] + ADP + H(+). It carries out the reaction L-threonyl-[protein] + ATP = O-phospho-L-threonyl-[protein] + ADP + H(+). It catalyses the reaction L-seryl-[tau protein] + ATP = O-phospho-L-seryl-[tau protein] + ADP + H(+). The enzyme catalyses L-threonyl-[tau protein] + ATP = O-phospho-L-threonyl-[tau protein] + ADP + H(+). Its activity is regulated as follows. Inhibited by PAK5; inhibition is independent of the kinase activity of PAK5. Activated by phosphorylation on Thr-208. Inhibited by phosphorylation at Ser-212 and Thr-596. Inhibited by hymenialdisine. Specifically inhibited by the H.pylori CagA peptide FPLKRHDKVDDLSK that mimics host substrates and binds to the kinase substrate-binding site. Functionally, serine/threonine-protein kinase. Involved in cell polarity and microtubule dynamics regulation. Phosphorylates CRTC2/TORC2, DCX, HDAC7, KIF13B, MAP2, MAP4 and RAB11FIP2. Phosphorylates the microtubule-associated protein MAPT/TAU. Plays a key role in cell polarity by phosphorylating the microtubule-associated proteins MAP2, MAP4 and MAPT/TAU at KXGS motifs, causing detachment from microtubules, and their disassembly. Regulates epithelial cell polarity by phosphorylating RAB11FIP2. Involved in the regulation of neuronal migration through its dual activities in regulating cellular polarity and microtubule dynamics, possibly by phosphorylating and regulating DCX. Regulates axogenesis by phosphorylating KIF13B, promoting interaction between KIF13B and 14-3-3 and inhibiting microtubule-dependent accumulation of KIF13B. Also required for neurite outgrowth and establishment of neuronal polarity. Regulates localization and activity of some histone deacetylases by mediating phosphorylation of HDAC7, promoting subsequent interaction between HDAC7 and 14-3-3 and export from the nucleus. Also acts as a positive regulator of the Wnt signaling pathway, probably by mediating phosphorylation of dishevelled proteins (DVL1, DVL2 and/or DVL3). Modulates the developmental decision to build a columnar versus a hepatic epithelial cell apparently by promoting a switch from a direct to a transcytotic mode of apical protein delivery. Essential for the asymmetric development of membrane domains of polarized epithelial cells. This is Serine/threonine-protein kinase MARK2 from Homo sapiens (Human).